A 217-amino-acid polypeptide reads, in one-letter code: Large ribosomal subunit protein uL1 (217 aa).

A Phosphotyrosine modification is found at tyrosine 11. 2 positions are modified to N6-acetyllysine: lysine 91 and lysine 106. An N6-acetyllysine; alternate modification is found at lysine 118. A Glycyl lysine isopeptide (Lys-Gly) (interchain with G-Cter in SUMO1); alternate cross-link involves residue lysine 118. Residue lysine 118 forms a Glycyl lysine isopeptide (Lys-Gly) (interchain with G-Cter in SUMO2); alternate linkage. A Glycyl lysine isopeptide (Lys-Gly) (interchain with G-Cter in SUMO2) cross-link involves residue lysine 161.

Belongs to the universal ribosomal protein uL1 family. Component of the large ribosomal subunit.

The protein resides in the cytoplasm. Functionally, component of the large ribosomal subunit. The ribosome is a large ribonucleoprotein complex responsible for the synthesis of proteins in the cell. The sequence is that of Large ribosomal subunit protein uL1 (RPL10A) from Oryctolagus cuniculus (Rabbit).